Consider the following 674-residue polypeptide: DNA-directed RNA polymerase subunit beta' (674 aa).

4 residues coordinate Zn(2+): C69, C71, C87, and C90. 3 residues coordinate Mg(2+): D494, D496, and D498.

The protein belongs to the RNA polymerase beta' chain family. RpoC1 subfamily. In terms of assembly, in plastids the minimal PEP RNA polymerase catalytic core is composed of four subunits: alpha, beta, beta', and beta''. When a (nuclear-encoded) sigma factor is associated with the core the holoenzyme is formed, which can initiate transcription. It depends on Mg(2+) as a cofactor. The cofactor is Zn(2+).

It localises to the plastid. Its subcellular location is the chloroplast. The enzyme catalyses RNA(n) + a ribonucleoside 5'-triphosphate = RNA(n+1) + diphosphate. DNA-dependent RNA polymerase catalyzes the transcription of DNA into RNA using the four ribonucleoside triphosphates as substrates. The sequence is that of DNA-directed RNA polymerase subunit beta' from Psilotum nudum (Whisk fern).